The chain runs to 581 residues: Proline--tRNA ligase (581 aa).

This sequence belongs to the class-II aminoacyl-tRNA synthetase family. ProS type 1 subfamily. As to quaternary structure, homodimer.

Its subcellular location is the cytoplasm. It catalyses the reaction tRNA(Pro) + L-proline + ATP = L-prolyl-tRNA(Pro) + AMP + diphosphate. Catalyzes the attachment of proline to tRNA(Pro) in a two-step reaction: proline is first activated by ATP to form Pro-AMP and then transferred to the acceptor end of tRNA(Pro). As ProRS can inadvertently accommodate and process non-cognate amino acids such as alanine and cysteine, to avoid such errors it has two additional distinct editing activities against alanine. One activity is designated as 'pretransfer' editing and involves the tRNA(Pro)-independent hydrolysis of activated Ala-AMP. The other activity is designated 'posttransfer' editing and involves deacylation of mischarged Ala-tRNA(Pro). The misacylated Cys-tRNA(Pro) is not edited by ProRS. This Delftia acidovorans (strain DSM 14801 / SPH-1) protein is Proline--tRNA ligase.